Here is a 152-residue protein sequence, read N- to C-terminus: Ubiquitin-conjugating enzyme E2 2 (152 aa).

The UBC core domain maps to 4 to 150; it reads PARKRLMRDF…VREVVEQSWT (147 aa). The Glycyl thioester intermediate role is filled by Cys-88.

Belongs to the ubiquitin-conjugating enzyme family. Expressed in all tissues examined. Lower levels found in leaves.

It catalyses the reaction S-ubiquitinyl-[E1 ubiquitin-activating enzyme]-L-cysteine + [E2 ubiquitin-conjugating enzyme]-L-cysteine = [E1 ubiquitin-activating enzyme]-L-cysteine + S-ubiquitinyl-[E2 ubiquitin-conjugating enzyme]-L-cysteine.. The protein operates within protein modification; protein ubiquitination. Accepts the ubiquitin from the E1 complex and catalyzes its covalent attachment to other proteins. This chain is Ubiquitin-conjugating enzyme E2 2 (UBC2), found in Arabidopsis thaliana (Mouse-ear cress).